We begin with the raw amino-acid sequence, 402 residues long: Myb-related protein 1 (402 aa).

One can recognise an HTH myb-type domain in the interval 42-102; that stretch reads TDAKPRLKWT…HLQKYRLSKN (61 aa). The H-T-H motif DNA-binding region spans 73 to 98; the sequence is PKTIMKVMGIPGLTLYHLKSHLQKYR. Positions 148–168 form a coiled coil; that stretch reads SDALQMQIEVQRRLHEQLEVQ. Positions 161-166 match the LHEQLE motif; it reads LHEQLE. A compositionally biased stretch (polar residues) spans 238-260; it reads QQMQKTYPPNSSLDSCLTSSEGT. Disordered regions lie at residues 238 to 266, 344 to 363, and 382 to 402; these read QQMQKTYPPNSSLDSCLTSSEGTQKAPKM, EHRGRSSNNSEYTEERFNEN, and HDENYGTTRPKQFDLNGFSWN.

The protein belongs to the MYB-CC family. Isoforms 1 and 2: homodimer. Isoform 3: loss of dimerization. In terms of tissue distribution, expressed in phloem and/or cambium.

It is found in the nucleus. In terms of biological role, transcription factor that may act on the GAL1 promoter. Acts redundantly with MYR2 as a repressor of flowering and organ elongation under decreased light intensity. Represses gibberellic acid (GA)-dependent responses and affects levels of bioactive GA. The sequence is that of Myb-related protein 1 from Arabidopsis thaliana (Mouse-ear cress).